The chain runs to 373 residues: 3 beta-hydroxysteroid dehydrogenase/Delta 5--&gt;4-isomerase type 2 (373 aa).

Catalysis depends on Tyr155, which acts as the Proton acceptor. An NAD(+)-binding site is contributed by Lys159. A helical membrane pass occupies residues 288–308 (VALLYWLGFLLELVNFLLRPV).

The protein belongs to the 3-beta-HSD family. As to expression, high levels in adrenal gland, kidney and male liver. Low levels in female liver.

The protein resides in the endoplasmic reticulum membrane. It is found in the mitochondrion membrane. It catalyses the reaction a 3beta-hydroxy-Delta(5)-steroid + NAD(+) = a 3-oxo-Delta(5)-steroid + NADH + H(+). The catalysed reaction is a 3-oxo-Delta(5)-steroid = a 3-oxo-Delta(4)-steroid. The enzyme catalyses pregnenolone + NAD(+) = pregn-5-ene-3,20-dione + NADH + H(+). It carries out the reaction pregn-5-ene-3,20-dione = progesterone. It catalyses the reaction 3beta-hydroxyandrost-5-en-17-one + NAD(+) = androst-5-ene-3,17-dione + NADH + H(+). The catalysed reaction is androst-5-ene-3,17-dione = androst-4-ene-3,17-dione. The protein operates within lipid metabolism; steroid biosynthesis. Functionally, 3-beta-HSD is a bifunctional enzyme, that catalyzes the oxidative conversion of Delta(5)-ene-3-beta-hydroxy steroid, and the oxidative conversion of ketosteroids. The 3-beta-HSD enzymatic system plays a crucial role in the biosynthesis of all classes of hormonal steroids. In Mesocricetus auratus (Golden hamster), this protein is 3 beta-hydroxysteroid dehydrogenase/Delta 5--&gt;4-isomerase type 2 (HSD3B2).